The chain runs to 276 residues: Putative non-heme chloroperoxidase (276 aa).

The AB hydrolase-1 domain occupies Pro-26–His-263. Residues Ser-99, Asp-228, and His-257 contribute to the active site.

It belongs to the AB hydrolase superfamily. Bacterial non-heme haloperoxidase / perhydrolase family.

This chain is Putative non-heme chloroperoxidase, found in Synechocystis sp. (strain ATCC 27184 / PCC 6803 / Kazusa).